A 454-amino-acid chain; its full sequence is Glutamyl-tRNA reductase (454 aa).

Residues 50-53 (TCNR), S103, 108-110 (EDQ), and Q114 each bind substrate. Catalysis depends on C51, which acts as the Nucleophile. Position 182–187 (182–187 (GAGEMG)) interacts with NADP(+). Residues 407 to 454 (LFDPNFGGDTPQPDRPDDIPRAAERGDISGDDLPDDVPNHIAEKVSDG) form a disordered region. Basic and acidic residues-rich tracts occupy residues 418–434 (QPDR…RGDI) and 443–454 (VPNHIAEKVSDG).

Belongs to the glutamyl-tRNA reductase family. As to quaternary structure, homodimer.

The enzyme catalyses (S)-4-amino-5-oxopentanoate + tRNA(Glu) + NADP(+) = L-glutamyl-tRNA(Glu) + NADPH + H(+). The protein operates within porphyrin-containing compound metabolism; protoporphyrin-IX biosynthesis; 5-aminolevulinate from L-glutamyl-tRNA(Glu): step 1/2. Functionally, catalyzes the NADPH-dependent reduction of glutamyl-tRNA(Glu) to glutamate 1-semialdehyde (GSA). This chain is Glutamyl-tRNA reductase, found in Haloquadratum walsbyi (strain DSM 16790 / HBSQ001).